The sequence spans 190 residues: Potassium-transporting ATPase KdpC subunit (190 aa).

The helical transmembrane segment at Thr10–Gly30 threads the bilayer.

This sequence belongs to the KdpC family. As to quaternary structure, the system is composed of three essential subunits: KdpA, KdpB and KdpC.

The protein resides in the cell inner membrane. Its function is as follows. Part of the high-affinity ATP-driven potassium transport (or Kdp) system, which catalyzes the hydrolysis of ATP coupled with the electrogenic transport of potassium into the cytoplasm. This subunit acts as a catalytic chaperone that increases the ATP-binding affinity of the ATP-hydrolyzing subunit KdpB by the formation of a transient KdpB/KdpC/ATP ternary complex. The polypeptide is Potassium-transporting ATPase KdpC subunit (Escherichia coli O157:H7).